The sequence spans 141 residues: Holo-[acyl-carrier-protein] synthase (141 aa).

2 residues coordinate Mg(2+): Asp8 and Glu61.

The protein belongs to the P-Pant transferase superfamily. AcpS family. It depends on Mg(2+) as a cofactor.

It localises to the cytoplasm. The catalysed reaction is apo-[ACP] + CoA = holo-[ACP] + adenosine 3',5'-bisphosphate + H(+). Transfers the 4'-phosphopantetheine moiety from coenzyme A to a Ser of acyl-carrier-protein. This chain is Holo-[acyl-carrier-protein] synthase, found in Rhodopseudomonas palustris (strain HaA2).